A 614-amino-acid polypeptide reads, in one-letter code: UvrABC system protein C (614 aa).

Residues 20–98 (TAPGVYRMYA…IKSLSPRYNV (79 aa)) enclose the GIY-YIG domain. Residues 207-242 (DELTRELGEQMQAASEALEFEQAARLRDLISSLRSM) form the UVR domain.

The protein belongs to the UvrC family. Interacts with UvrB in an incision complex.

The protein localises to the cytoplasm. The UvrABC repair system catalyzes the recognition and processing of DNA lesions. UvrC both incises the 5' and 3' sides of the lesion. The N-terminal half is responsible for the 3' incision and the C-terminal half is responsible for the 5' incision. The protein is UvrABC system protein C of Stenotrophomonas maltophilia (strain R551-3).